We begin with the raw amino-acid sequence, 368 residues long: Phosphoribosylaminoimidazole-succinocarboxamide synthase (368 aa).

This sequence belongs to the SAICAR synthetase family.

The catalysed reaction is 5-amino-1-(5-phospho-D-ribosyl)imidazole-4-carboxylate + L-aspartate + ATP = (2S)-2-[5-amino-1-(5-phospho-beta-D-ribosyl)imidazole-4-carboxamido]succinate + ADP + phosphate + 2 H(+). The protein operates within purine metabolism; IMP biosynthesis via de novo pathway; 5-amino-1-(5-phospho-D-ribosyl)imidazole-4-carboxamide from 5-amino-1-(5-phospho-D-ribosyl)imidazole-4-carboxylate: step 1/2. This Vibrio cholerae serotype O1 (strain ATCC 39315 / El Tor Inaba N16961) protein is Phosphoribosylaminoimidazole-succinocarboxamide synthase.